Consider the following 362-residue polypeptide: Thiol protease aleurain (362 aa).

A signal peptide spans 1–22 (MAHARVLLLALAVLATAAVAVA). Positions 23–143 (SSSSFADSNP…GNHLMRDAAA (121 aa)) are cleaved as a propeptide — activation peptide. Disulfide bonds link Cys-165-Cys-208 and Cys-199-Cys-241. Cys-168 is a catalytic residue. N-linked (GlcNAc...) asparagine glycosylation occurs at Asn-188. The N-linked (GlcNAc...) asparagine glycan is linked to Asn-257. Cysteines 299 and 349 form a disulfide. Residues His-308 and Asn-328 contribute to the active site.

This sequence belongs to the peptidase C1 family.

It is found in the vacuole. It catalyses the reaction Hydrolysis of proteins, acting as an aminopeptidase (notably, cleaving Arg-|-Xaa bonds) as well as an endopeptidase.. Its function is as follows. May play a role in proteolysis leading to mobilization of nitrogen during senescence and starvation. This chain is Thiol protease aleurain, found in Hordeum vulgare (Barley).